The sequence spans 137 residues: Insulin-like peptide 2 (137 aa).

Positions Met1 to Gly26 are cleaved as a signal peptide. Intrachain disulfides connect Cys29-Cys119, Cys41-Cys132, and Cys118-Cys123. A propeptide spans Ala53–Val104 (connecting peptide).

Belongs to the insulin family. Heterodimer of a B chain and an A chain linked by two disulfide bonds. As to expression, broadly expressed at a low level in the embryonic mesoderm, beginning at stage 12. Expressed at a high level in the embryonic anterior midgut, with expression diminishing at late stage 16. Expressed at a low level in larval imaginal disks. Expressed at a high level in larval salivary glands and in seven cells of each larval brain hemisphere that may correspond to neurosecretory cells.

The protein resides in the secreted. In terms of biological role, possible ligand of InR/insulin-like receptor. Plays a role in regulating body size by increasing cell size and cell number of individual organs. Probably mediates its growth effects by acting as a ligand for the insulin receptor and transducing a signal via the Chico/PI3K/Akt(PKB) pathway. The protein is Insulin-like peptide 2 of Drosophila melanogaster (Fruit fly).